Reading from the N-terminus, the 158-residue chain is Peptide methionine sulfoxide reductase MsrA (158 aa).

Cysteine 10 is an active-site residue.

The protein belongs to the MsrA Met sulfoxide reductase family.

The catalysed reaction is L-methionyl-[protein] + [thioredoxin]-disulfide + H2O = L-methionyl-(S)-S-oxide-[protein] + [thioredoxin]-dithiol. It catalyses the reaction [thioredoxin]-disulfide + L-methionine + H2O = L-methionine (S)-S-oxide + [thioredoxin]-dithiol. Functionally, has an important function as a repair enzyme for proteins that have been inactivated by oxidation. Catalyzes the reversible oxidation-reduction of methionine sulfoxide in proteins to methionine. The sequence is that of Peptide methionine sulfoxide reductase MsrA from Alkaliphilus metalliredigens (strain QYMF).